The following is a 170-amino-acid chain: Peptide deformylase (170 aa).

Cysteine 94 and histidine 136 together coordinate Fe cation. The active site involves glutamate 137. Histidine 140 is a binding site for Fe cation.

It belongs to the polypeptide deformylase family. Requires Fe(2+) as cofactor.

The enzyme catalyses N-terminal N-formyl-L-methionyl-[peptide] + H2O = N-terminal L-methionyl-[peptide] + formate. Removes the formyl group from the N-terminal Met of newly synthesized proteins. Requires at least a dipeptide for an efficient rate of reaction. N-terminal L-methionine is a prerequisite for activity but the enzyme has broad specificity at other positions. This Stenotrophomonas maltophilia (strain K279a) protein is Peptide deformylase.